Consider the following 476-residue polypeptide: Protein transport protein Sec61 subunit alpha-like 2 (476 aa).

Residues 2–33 (AIKFLEVIKPFCAVLPEIQKPERRIQFKEKVL) lie on the Cytoplasmic side of the membrane. A helical membrane pass occupies residues 34-53 (WTAITLFIFLVCCQIPLFGI). The Lumenal segment spans residues 54 to 76 (MSSDSADPFYWMRVIMASNRGTL). The helical transmembrane segment at 77–96 (MELGISPIVTSGLIMQLLAG) threads the bilayer. Topologically, residues 97-117 (AKIIEVGDTPKDRALFNGAQK) are cytoplasmic. The helical transmembrane segment at 118-138 (LFGMIITIGQAVVYVMTGMYG) threads the bilayer. The Lumenal segment spans residues 139–144 (DPSEMG). The chain crosses the membrane as a helical span at residues 145–165 (AGICLLIIIQLFVAGLIVLLL). Topologically, residues 166 to 172 (DELLQKG) are cytoplasmic. Residues 173-193 (YGLGSGISLFIATNICETIVW) form a helical membrane-spanning segment. Residues 194–240 (KAFSPTTVNTGRGTEFEGAIIALFHLLATRTDKVRALREAFYRQNLP) are Lumenal-facing. A helical transmembrane segment spans residues 241–261 (NLMNLIATIFVFAVVIYFQGF). Residues 262-288 (RVDLPIKSARYRGQYNTYPIKLFYTSN) lie on the Cytoplasmic side of the membrane. A helical membrane pass occupies residues 289–309 (IPIILQSALVSNLYVISQMLS). The Lumenal portion of the chain corresponds to 310 to 354 (TRFSGNFLVNLLGTWSDTSTGGPARAYPVGGLCYYLSPPESFGTV). A helical membrane pass occupies residues 355–375 (LEDPIHAIIYIIFMLGSCAFF). Topologically, residues 376–420 (SKTWIEVSGSSAKDVAKQLKEQQMVMRGHRETSMVHELNRYIPTA) are cytoplasmic. The helical transmembrane segment at 421-441 (AAFGGLCIGGLSVMADFLGAI) threads the bilayer. Topologically, residues 442–445 (GSGT) are lumenal. A helical transmembrane segment spans residues 446–462 (GILLAVTIIYQYFEIFV). The Cytoplasmic segment spans residues 463–476 (KEQSEVGSVGALLF).

The protein belongs to the SecY/SEC61-alpha family. As to quaternary structure, the SEC61 channel-forming translocon complex consists of channel-forming core components SEC61A1, SEC61B and SEC61G and different auxiliary components such as SEC62 and SEC63.

It is found in the endoplasmic reticulum membrane. Component of SEC61 channel-forming translocon complex that mediates transport of signal peptide-containing precursor polypeptides across the endoplasmic reticulum (ER). Forms a ribosome receptor and a gated pore in the ER membrane, both functions required for cotranslational translocation of nascent polypeptides. The protein is Protein transport protein Sec61 subunit alpha-like 2 (sec61al2) of Danio rerio (Zebrafish).